The primary structure comprises 107 residues: ATPase inhibitor, mitochondrial (107 aa).

A mitochondrion-targeting transit peptide spans 1 to 25 (MAGSALAVRARLGVWGMRVLQTRGF). Residues 25–58 (FGSDSSESMDSGAGSIREAGGAFGKREKAEEDRY) form a disordered region. The N-terminal inhibitory region stretch occupies residues 26 to 52 (GSDSSESMDSGAGSIREAGGAFGKREK). The residue at position 39 (Ser39) is a Phosphoserine. Residues 48 to 58 (GKREKAEEDRY) show a composition bias toward basic and acidic residues. The stretch at 60–107 (REKTREQLAALKKHHEDEIDHHSKEIERLQKQIERHKKKIKYLKNSEH) forms a coiled coil. Residues 74–106 (HEDEIDHHSKEIERLQKQIERHKKKIKYLKNSE) form an antiparallel alpha-helical coiled coil region region. Lys103 carries the N6-succinyllysine modification.

Belongs to the ATPase inhibitor family. In terms of assembly, homodimer; represents the active form and is present at a pH value below 6.5. Homotetramer; represents the inactive form and is present at a pH value above 7.0.

It is found in the mitochondrion. Endogenous F(1)F(o)-ATPase inhibitor limiting ATP depletion when the mitochondrial membrane potential falls below a threshold and the F(1)F(o)-ATP synthase starts hydrolyzing ATP to pump protons out of the mitochondrial matrix. Required to avoid the consumption of cellular ATP when the F(1)F(o)-ATP synthase enzyme acts as an ATP hydrolase. Indirectly acts as a regulator of heme synthesis in erythroid tissues: regulates heme synthesis by modulating the mitochondrial pH and redox potential, allowing FECH to efficiently catalyze the incorporation of iron into protoporphyrin IX to produce heme. In Rattus norvegicus (Rat), this protein is ATPase inhibitor, mitochondrial.